We begin with the raw amino-acid sequence, 78 residues long: UPF0270 protein YPTB3725 (78 aa).

It belongs to the UPF0270 family.

In Yersinia pseudotuberculosis serotype I (strain IP32953), this protein is UPF0270 protein YPTB3725.